Here is a 137-residue protein sequence, read N- to C-terminus: Large ribosomal subunit protein bL12 (137 aa).

This sequence belongs to the bacterial ribosomal protein bL12 family. Homodimer. Part of the ribosomal stalk of the 50S ribosomal subunit. Forms a multimeric L10(L12)X complex, where L10 forms an elongated spine to which 2 to 4 L12 dimers bind in a sequential fashion. Binds GTP-bound translation factors.

In terms of biological role, forms part of the ribosomal stalk which helps the ribosome interact with GTP-bound translation factors. Is thus essential for accurate translation. The chain is Large ribosomal subunit protein bL12 from Gloeobacter violaceus (strain ATCC 29082 / PCC 7421).